A 274-amino-acid chain; its full sequence is tRNA pseudouridine synthase A (274 aa).

Catalysis depends on Asp-54, which acts as the Nucleophile. Tyr-112 lines the substrate pocket.

The protein belongs to the tRNA pseudouridine synthase TruA family. In terms of assembly, homodimer.

It catalyses the reaction uridine(38/39/40) in tRNA = pseudouridine(38/39/40) in tRNA. Its function is as follows. Formation of pseudouridine at positions 38, 39 and 40 in the anticodon stem and loop of transfer RNAs. The polypeptide is tRNA pseudouridine synthase A (Solidesulfovibrio magneticus (strain ATCC 700980 / DSM 13731 / RS-1) (Desulfovibrio magneticus)).